Reading from the N-terminus, the 178-residue chain is Large ribosomal subunit protein uL6 (178 aa).

The protein belongs to the universal ribosomal protein uL6 family. As to quaternary structure, part of the 50S ribosomal subunit.

This protein binds to the 23S rRNA, and is important in its secondary structure. It is located near the subunit interface in the base of the L7/L12 stalk, and near the tRNA binding site of the peptidyltransferase center. This is Large ribosomal subunit protein uL6 from Staphylococcus aureus (strain Mu3 / ATCC 700698).